The sequence spans 508 residues: MAP kinase kinase MKK1/SSP32 (508 aa).

Disordered regions lie at residues 1–21 (MASLFRPPESAKCNPNSPRLK), 35–95 (IYLT…LSIN), and 130–158 (ELSGNSDLTPSSMASPFSHTNTSSPYLRN). Residues 35–47 (IYLTSNGSSTTAY) are compositionally biased toward polar residues. The span at 48–66 (SSHTPEPLTSSTSTLFSQT) shows a compositional bias: low complexity. 2 stretches are compositionally biased toward polar residues: residues 67–79 (RLHPSDSSMTLNT) and 131–158 (LSGNSDLTPSSMASPFSHTNTSSPYLRN). Position 192 is a phosphoserine (serine 192). The Protein kinase domain occupies 221 to 488 (IETLGILGEG…PRQMINHPWI (268 aa)). ATP contacts are provided by residues 227–235 (LGEGAGGSV) and lysine 250. The Proton acceptor role is filled by aspartate 349.

This sequence belongs to the protein kinase superfamily. STE Ser/Thr protein kinase family. MAP kinase kinase subfamily.

The enzyme catalyses L-seryl-[protein] + ATP = O-phospho-L-seryl-[protein] + ADP + H(+). It catalyses the reaction L-threonyl-[protein] + ATP = O-phospho-L-threonyl-[protein] + ADP + H(+). The catalysed reaction is L-tyrosyl-[protein] + ATP = O-phospho-L-tyrosyl-[protein] + ADP + H(+). Involved in a signal transduction pathway that play a role in yeast cell morphogenesis and cell growth. This pathway seems to start by SMP3; then involve the kinase PKC1 that may act on the BCK1 kinase that then phosphorylates MKK1 and MKK2 which themselves phosphorylate the MPK1 kinase. The protein is MAP kinase kinase MKK1/SSP32 (MKK1) of Saccharomyces cerevisiae (strain ATCC 204508 / S288c) (Baker's yeast).